We begin with the raw amino-acid sequence, 76 residues long: uncharacterized protein (76 aa).

This is an uncharacterized protein from Human cytomegalovirus (strain AD169) (HHV-5).